Consider the following 225-residue polypeptide: Flagellar transcriptional regulator FlhC (225 aa).

Residues Cys-149, Cys-152, Cys-169, and Cys-172 each coordinate Zn(2+).

Belongs to the FlhC family. In terms of assembly, heterohexamer composed of two FlhC and four FlhD subunits. Each FlhC binds a FlhD dimer, forming a heterotrimer, and a hexamer assembles by dimerization of two heterotrimers. Requires Zn(2+) as cofactor.

Its subcellular location is the cytoplasm. In terms of biological role, functions in complex with FlhD as a master transcriptional regulator that regulates transcription of several flagellar and non-flagellar operons by binding to their promoter region. Activates expression of class 2 flagellar genes, including fliA, which is a flagellum-specific sigma factor that turns on the class 3 genes. Also regulates genes whose products function in a variety of physiological pathways. This Burkholderia lata (strain ATCC 17760 / DSM 23089 / LMG 22485 / NCIMB 9086 / R18194 / 383) protein is Flagellar transcriptional regulator FlhC.